Reading from the N-terminus, the 339-residue chain is Intelectin-1 (339 aa).

The signal sequence occupies residues 1–18 (MLSYSLLLLALAFPAGHA). Residues 58–108 (GDMNYGYRSCNEIKSSDSRAPDGIYTLATEDGESYQTFCDMTTNGGGWTLV) enclose the Fibrinogen C-terminal domain. A disulfide bridge connects residues cysteine 67 and cysteine 96. Residues histidine 112, glutamate 113, asparagine 115, glycine 118, glycine 123, aspartate 124, and aspartate 159 each coordinate Ca(2+). Intrachain disulfides connect cysteine 120-cysteine 306, cysteine 225-cysteine 285, and cysteine 277-cysteine 291. Asparagine 189 is a glycosylation site (N-linked (GlcNAc...) asparagine). The Ca(2+) site is built by asparagine 286, glutamate 288, glutamate 300, and aspartate 308. A carbohydrate-binding positions include 288–289 (EH) and glutamate 300.

Homotrimer; disulfide-linked. Homohexamer; disulfide-linked. Forms primarily homotrimers in solution, but can also form homohexamers. In terms of processing, N-glycosylated.

It is found in the secreted. The protein resides in the cytoplasmic vesicle. The protein localises to the secretory vesicle. Functionally, lectin that specifically recognizes microbial carbohydrate chains in a calcium-dependent manner. Binds to microbial glycans that contain a terminal acyclic 1,2-diol moiety, including beta-linked D-galactofuranose (beta-Galf) and D-phosphoglycerol-modified glycans. Binds to S.pneumoniae serotypes with glycans that contain beta-linked D-galactofuranose (beta-Galf) and with D-phosphoglycerol-modified glycans. Can bind a variety of monosaccharides (in vitro). Probably plays a role in the defense system against microorganisms. This Xenopus laevis (African clawed frog) protein is Intelectin-1 (itln1).